The primary structure comprises 279 residues: UTP--glucose-1-phosphate uridylyltransferase (279 aa).

It belongs to the UDPGP type 2 family.

The enzyme catalyses alpha-D-glucose 1-phosphate + UTP + H(+) = UDP-alpha-D-glucose + diphosphate. Its function is as follows. May play a role in stationary phase survival. In Pseudomonas aeruginosa (strain ATCC 15692 / DSM 22644 / CIP 104116 / JCM 14847 / LMG 12228 / 1C / PRS 101 / PAO1), this protein is UTP--glucose-1-phosphate uridylyltransferase (galU).